We begin with the raw amino-acid sequence, 127 residues long: Large ribosomal subunit protein bL17 (127 aa).

Belongs to the bacterial ribosomal protein bL17 family. Part of the 50S ribosomal subunit. Contacts protein L32.

The sequence is that of Large ribosomal subunit protein bL17 from Levilactobacillus brevis (strain ATCC 367 / BCRC 12310 / CIP 105137 / JCM 1170 / LMG 11437 / NCIMB 947 / NCTC 947) (Lactobacillus brevis).